Consider the following 523-residue polypeptide: 2-isopropylmalate synthase (523 aa).

The Pyruvate carboxyltransferase domain maps to 5–267 (VIIFDTTLRD…ETGINAKEIH (263 aa)). The Mn(2+) site is built by Asp-14, His-202, His-204, and Asn-238. A regulatory domain region spans residues 392 to 523 (KLQQLVVHSD…QQNKRELGGV (132 aa)).

The protein belongs to the alpha-IPM synthase/homocitrate synthase family. LeuA type 1 subfamily. Homodimer. Mn(2+) serves as cofactor.

It is found in the cytoplasm. The catalysed reaction is 3-methyl-2-oxobutanoate + acetyl-CoA + H2O = (2S)-2-isopropylmalate + CoA + H(+). It functions in the pathway amino-acid biosynthesis; L-leucine biosynthesis; L-leucine from 3-methyl-2-oxobutanoate: step 1/4. Functionally, catalyzes the condensation of the acetyl group of acetyl-CoA with 3-methyl-2-oxobutanoate (2-ketoisovalerate) to form 3-carboxy-3-hydroxy-4-methylpentanoate (2-isopropylmalate). The protein is 2-isopropylmalate synthase of Shewanella pealeana (strain ATCC 700345 / ANG-SQ1).